The chain runs to 141 residues: Large ribosomal subunit protein uL22 (141 aa).

The protein belongs to the universal ribosomal protein uL22 family. Part of the 50S ribosomal subunit.

In terms of biological role, this protein binds specifically to 23S rRNA; its binding is stimulated by other ribosomal proteins, e.g. L4, L17, and L20. It is important during the early stages of 50S assembly. It makes multiple contacts with different domains of the 23S rRNA in the assembled 50S subunit and ribosome. Its function is as follows. The globular domain of the protein is located near the polypeptide exit tunnel on the outside of the subunit, while an extended beta-hairpin is found that lines the wall of the exit tunnel in the center of the 70S ribosome. This is Large ribosomal subunit protein uL22 from Frankia casuarinae (strain DSM 45818 / CECT 9043 / HFP020203 / CcI3).